A 285-amino-acid chain; its full sequence is Polyamine aminopropyltransferase (285 aa).

The 236-residue stretch at 2–237 (QMWFSQYHTV…GYWLFGFASK (236 aa)) folds into the PABS domain. Gln31 is a binding site for S-methyl-5'-thioadenosine. Asp86 serves as a coordination point for spermidine. S-methyl-5'-thioadenosine is bound by residues Glu106 and 137-138 (DG). The active-site Proton acceptor is Asp155. 155-158 (DSTD) is a binding site for spermidine.

The protein belongs to the spermidine/spermine synthase family. As to quaternary structure, homodimer or homotetramer.

Its subcellular location is the cytoplasm. The catalysed reaction is S-adenosyl 3-(methylsulfanyl)propylamine + putrescine = S-methyl-5'-thioadenosine + spermidine + H(+). It participates in amine and polyamine biosynthesis; spermidine biosynthesis; spermidine from putrescine: step 1/1. In terms of biological role, catalyzes the irreversible transfer of a propylamine group from the amino donor S-adenosylmethioninamine (decarboxy-AdoMet) to putrescine (1,4-diaminobutane) to yield spermidine. This Agathobacter rectalis (strain ATCC 33656 / DSM 3377 / JCM 17463 / KCTC 5835 / VPI 0990) (Eubacterium rectale) protein is Polyamine aminopropyltransferase.